The sequence spans 72 residues: Beta-defensin 104A (72 aa).

An N-terminal signal peptide occupies residues 1–22 (MRRLVLLLAISLLLYQDLPVRS). 3 disulfide bridges follow: Cys30–Cys57, Cys37–Cys51, and Cys41–Cys58.

This sequence belongs to the beta-defensin family.

The protein localises to the secreted. Functionally, has antimicrobial activity. This Gorilla gorilla gorilla (Western lowland gorilla) protein is Beta-defensin 104A (DEFB104A).